The sequence spans 575 residues: Phosphoenolpyruvate-protein phosphotransferase (575 aa).

Catalysis depends on His189, which acts as the Tele-phosphohistidine intermediate. Arg296 and Arg332 together coordinate phosphoenolpyruvate. Glu431 and Asp455 together coordinate Mg(2+). Phosphoenolpyruvate-binding positions include 454–455 (ND) and Arg465. Cys502 serves as the catalytic Proton donor.

It belongs to the PEP-utilizing enzyme family. In terms of assembly, homodimer. Mg(2+) serves as cofactor.

It localises to the cytoplasm. The catalysed reaction is L-histidyl-[protein] + phosphoenolpyruvate = N(pros)-phospho-L-histidyl-[protein] + pyruvate. In terms of biological role, general (non sugar-specific) component of the phosphoenolpyruvate-dependent sugar phosphotransferase system (sugar PTS). This major carbohydrate active-transport system catalyzes the phosphorylation of incoming sugar substrates concomitantly with their translocation across the cell membrane. Enzyme I transfers the phosphoryl group from phosphoenolpyruvate (PEP) to the phosphoryl carrier protein (HPr). The polypeptide is Phosphoenolpyruvate-protein phosphotransferase (ptsI) (Salmonella typhimurium (strain LT2 / SGSC1412 / ATCC 700720)).